Reading from the N-terminus, the 467-residue chain is Hydroxyacid-oxoacid transhydrogenase, mitochondrial (467 aa).

Position 445 is an N6-acetyllysine (Lys-445). Ser-452 carries the phosphoserine modification.

This sequence belongs to the iron-containing alcohol dehydrogenase family. Hydroxyacid-oxoacid transhydrogenase subfamily.

Its subcellular location is the mitochondrion. It catalyses the reaction (S)-3-hydroxybutanoate + 2-oxoglutarate = (R)-2-hydroxyglutarate + acetoacetate. It carries out the reaction 4-hydroxybutanoate + 2-oxoglutarate = (R)-2-hydroxyglutarate + succinate semialdehyde. Functionally, catalyzes the cofactor-independent reversible oxidation of gamma-hydroxybutyrate (GHB) to succinic semialdehyde (SSA) coupled to reduction of 2-ketoglutarate (2-KG) to D-2-hydroxyglutarate (D-2-HG). L-3-hydroxybutyrate (L-3-OHB) is also a substrate for HOT when using 2-KG as hydrogen acceptor, resulting in the formation of D-2-HG. This chain is Hydroxyacid-oxoacid transhydrogenase, mitochondrial (ADHFE1), found in Pongo abelii (Sumatran orangutan).